We begin with the raw amino-acid sequence, 205 residues long: Methylamine utilization protein MauD (205 aa).

A helical membrane pass occupies residues 5-25; it reads FLIASNVLLWLALIGCAVLML. A Thioredoxin domain is found at 50–184; it reads PDVGDAAPTF…LESLLEADKS (135 aa).

Its subcellular location is the membrane. Its pathway is one-carbon metabolism; methylamine degradation. Its function is as follows. May be specifically involved in the processing, transport, and/or maturation of the MADH beta-subunit. The sequence is that of Methylamine utilization protein MauD (mauD) from Methylorubrum extorquens (strain ATCC 14718 / DSM 1338 / JCM 2805 / NCIMB 9133 / AM1) (Methylobacterium extorquens).